We begin with the raw amino-acid sequence, 404 residues long: Cysteine desulfurase IscS (404 aa).

Pyridoxal 5'-phosphate contacts are provided by residues 75-76, Asn155, Gln183, and 203-205; these read AT and SGH. Position 206 is an N6-(pyridoxal phosphate)lysine (Lys206). A pyridoxal 5'-phosphate-binding site is contributed by Thr243. Cys328 serves as the catalytic Cysteine persulfide intermediate. Cys328 serves as a coordination point for [2Fe-2S] cluster.

The protein belongs to the class-V pyridoxal-phosphate-dependent aminotransferase family. NifS/IscS subfamily. Homodimer. Forms a heterotetramer with IscU, interacts with other sulfur acceptors. The cofactor is pyridoxal 5'-phosphate.

The protein resides in the cytoplasm. The enzyme catalyses (sulfur carrier)-H + L-cysteine = (sulfur carrier)-SH + L-alanine. Its pathway is cofactor biosynthesis; iron-sulfur cluster biosynthesis. Its function is as follows. Master enzyme that delivers sulfur to a number of partners involved in Fe-S cluster assembly, tRNA modification or cofactor biosynthesis. Catalyzes the removal of elemental sulfur and selenium atoms from cysteine and selenocysteine to produce alanine. Functions as a sulfur delivery protein for Fe-S cluster synthesis onto IscU, an Fe-S scaffold assembly protein, as well as other S acceptor proteins. Also functions as a selenium delivery protein in the pathway for the biosynthesis of selenophosphate. This is Cysteine desulfurase IscS from Salmonella schwarzengrund (strain CVM19633).